The following is a 648-amino-acid chain: MSEKIYDVPAEWAKRAWVDQAKYKEMYARSISDPNGFWAEQAKRIDWMKAPTKIENVSFAPGNVSIKWFEDGVLNVAHNCIDRHLHKRANQTAIIWEGDDPSQSRHITYKELHDEVCRMANILRTRNVKKGDRVTIYLPMIPEAAYAMLACARIGAIHSVVFAGFSPDSLAQRINDCQSKVIITADEGLRGGKKVPLKANVDAALAKADGVDWVVVVKRTGGKIDMNPTRDLWYHEAAAMVTTECPVEHMHAEDPLFILYTSGSTGQPKGVLHTSAGYLVYAAMTHQYVFDYHDGDIYWCTADVGWVTGHSYILYGPLANGATTLMFEGVPNYPDNSRFWNVIDKHKVNTFYTAPTAIRALMQGGDEPVKKTSRASLRLLGSVGEPINPEAWEWYHRVVGEDRCPIVDTWWQTETGGILITPLPGATKLKPGSATQPFFGVVPEIVDADGKVLEGETTGNLCLTRAWPGMMRTVYGDHARFEQTYFSTYKGKYFTGDGCRRDADGYYWITGRVDDVINVSGHRMGTAEVESALVAHEKVSEAAVVGFPHDIKGQGIYAYVTLMAGVQPTEDLRKELVTWVRKEIGPIASPDQIQFAPGLPKTRSGKIMRRILRKIAEDEPGSLGDTSTLADPAVVDDLVKNRQNKKSA.

Residues 190–193 (RGGK), Thr-308, and Asn-332 contribute to the CoA site. Residues 384–386 (GEP), 408–413 (DTWWQT), Asp-497, and Arg-512 contribute to the ATP site. Position 520 (Ser-520) interacts with CoA. Arg-523 provides a ligand contact to ATP. Val-534, His-536, and Val-539 together coordinate Mg(2+). Residue Arg-581 coordinates CoA. At Lys-606 the chain carries N6-acetyllysine.

The protein belongs to the ATP-dependent AMP-binding enzyme family. Mg(2+) is required as a cofactor. In terms of processing, acetylated. Deacetylation by the SIR2-homolog deacetylase activates the enzyme.

The catalysed reaction is acetate + ATP + CoA = acetyl-CoA + AMP + diphosphate. In terms of biological role, catalyzes the conversion of acetate into acetyl-CoA (AcCoA), an essential intermediate at the junction of anabolic and catabolic pathways. AcsA undergoes a two-step reaction. In the first half reaction, AcsA combines acetate with ATP to form acetyl-adenylate (AcAMP) intermediate. In the second half reaction, it can then transfer the acetyl group from AcAMP to the sulfhydryl group of CoA, forming the product AcCoA. This is Acetyl-coenzyme A synthetase from Bradyrhizobium diazoefficiens (strain JCM 10833 / BCRC 13528 / IAM 13628 / NBRC 14792 / USDA 110).